The sequence spans 442 residues: Cytochrome c biogenesis protein CcsB (442 aa).

3 helical membrane passes run Leu17 to Ile37, Thr76 to Thr96, and Leu162 to Ala182.

The protein belongs to the Ccs1/CcsB family. In terms of assembly, may interact with CcsA.

The protein resides in the cellular thylakoid membrane. In terms of biological role, required during biogenesis of c-type cytochromes (cytochrome c6 and cytochrome f) at the step of heme attachment. In Thermosynechococcus vestitus (strain NIES-2133 / IAM M-273 / BP-1), this protein is Cytochrome c biogenesis protein CcsB.